A 389-amino-acid chain; its full sequence is S-adenosylmethionine synthase (389 aa).

Histidine 15 contributes to the ATP binding site. Aspartate 17 contributes to the Mg(2+) binding site. Residue glutamate 43 coordinates K(+). 2 residues coordinate L-methionine: glutamate 56 and glutamine 99. The segment at 99 to 109 is flexible loop; the sequence is QSPDIAQGVNE. ATP-binding positions include 166 to 168, 234 to 235, aspartate 243, 249 to 250, alanine 266, and lysine 270; these read DAK, RF, and RK. Aspartate 243 lines the L-methionine pocket. Lysine 274 contacts L-methionine.

The protein belongs to the AdoMet synthase family. As to quaternary structure, homotetramer; dimer of dimers. The cofactor is Mg(2+). Requires K(+) as cofactor.

It localises to the cytoplasm. It carries out the reaction L-methionine + ATP + H2O = S-adenosyl-L-methionine + phosphate + diphosphate. The protein operates within amino-acid biosynthesis; S-adenosyl-L-methionine biosynthesis; S-adenosyl-L-methionine from L-methionine: step 1/1. Its function is as follows. Catalyzes the formation of S-adenosylmethionine (AdoMet) from methionine and ATP. The overall synthetic reaction is composed of two sequential steps, AdoMet formation and the subsequent tripolyphosphate hydrolysis which occurs prior to release of AdoMet from the enzyme. In Neisseria meningitidis serogroup B (strain ATCC BAA-335 / MC58), this protein is S-adenosylmethionine synthase.